A 321-amino-acid chain; its full sequence is Solute carrier family 25 member 33 (321 aa).

Solcar repeat units lie at residues 9 to 118 (ENTL…AKEQ), 126 to 213 (NSNI…LKKY), and 231 to 315 (TSFF…IVYL). 6 consecutive transmembrane segments (helical) span residues 12–32 (LLHL…TCPL), 49–65 (VYYP…AGMV), 121–141 (GIFV…AAFI), 190–210 (LTAS…YESL), 233–253 (FFGL…IAYP), and 298–318 (QIPN…LLED).

The protein belongs to the mitochondrial carrier (TC 2.A.29) family. As to expression, expressed in the central nervous system. Also expressed in testis and skeletal muscle. Weakly expressed in heart, liver, kidney, prostate, colon and peripheral blood leukocytes.

Its subcellular location is the mitochondrion inner membrane. The catalysed reaction is UTP(in) + UDP(out) = UTP(out) + UDP(in). It catalyses the reaction dUTP(out) + UTP(in) = dUTP(in) + UTP(out). It carries out the reaction 5-methyl-UTP(out) + UTP(in) = 5-methyl-UTP(in) + UTP(out). The enzyme catalyses 5-methyl-UDP(out) + UTP(in) = 5-methyl-UDP(in) + UTP(out). The catalysed reaction is UTP(in) + CTP(out) = UTP(out) + CTP(in). It catalyses the reaction CDP(out) + UTP(in) = CDP(in) + UTP(out). It carries out the reaction dCTP(out) + UTP(in) = dCTP(in) + UTP(out). The enzyme catalyses dCDP(out) + UTP(in) = dCDP(in) + UTP(out). The catalysed reaction is UTP(in) + GTP(out) = UTP(out) + GTP(in). It catalyses the reaction UTP(in) + GDP(out) = UTP(out) + GDP(in). It carries out the reaction dGTP(out) + UTP(in) = dGTP(in) + UTP(out). The enzyme catalyses dGDP(out) + UTP(in) = dGDP(in) + UTP(out). The catalysed reaction is ITP(out) + UTP(in) = ITP(in) + UTP(out). Its activity is regulated as follows. Inhibited by pyridoxal 5'-phosphate, 4,7-diphenyl-1,10-phenanthroline, tannic acid, and mercurials (mercury dichloride, mersalyl acid, p-hydroxymercuribenzoate). Mitochondrial transporter that imports/exports pyrimidine nucleotides into and from mitochondria. Selectively transports uridine, thymidine, guanosine, cytosine and inosine (deoxy)nucleoside di- and triphosphates by an antiport mechanism. May import (deoxy)nucleoside triphosphates in exchange for intramitochondrial (deoxy)nucleoside diphosphates, thus providing precursors necessary for de novo synthesis of mitochondrial DNA and RNA while exporting products of their catabolism. Participates in mitochondrial genome maintenance, regulation of mitochondrial membrane potential and mitochondrial respiration. Upon INS or IGF1 stimulation regulates cell growth and proliferation by controlling mitochondrial DNA replication and transcription, the ratio of mitochondria-to nuclear-encoded components of the electron transport chain resulting in control of mitochondrial ROS production. Participates in dendritic cell endocytosis and may associate with mitochondrial oxidative phosphorylation. In Homo sapiens (Human), this protein is Solute carrier family 25 member 33 (SLC25A33).